The sequence spans 359 residues: Pyruvate dehydrogenase E1 component subunit beta, mitochondrial (359 aa).

Residues 1-19 constitute a mitochondrion transit peptide; it reads MLGVIRNKTIRPSFSAFRF. Glu-82 contributes to the thiamine diphosphate binding site. The K(+) site is built by Ile-135, Ala-183, Ile-184, and Asp-186.

Tetramer of 2 alpha and 2 beta subunits. The cofactor is thiamine diphosphate.

The protein resides in the mitochondrion matrix. The enzyme catalyses N(6)-[(R)-lipoyl]-L-lysyl-[protein] + pyruvate + H(+) = N(6)-[(R)-S(8)-acetyldihydrolipoyl]-L-lysyl-[protein] + CO2. In terms of biological role, the pyruvate dehydrogenase complex catalyzes the overall conversion of pyruvate to acetyl-CoA and CO(2). It contains multiple copies of three enzymatic components: pyruvate dehydrogenase (E1), dihydrolipoamide acetyltransferase (E2) and lipoamide dehydrogenase (E3). This chain is Pyruvate dehydrogenase E1 component subunit beta, mitochondrial, found in Pisum sativum (Garden pea).